Reading from the N-terminus, the 320-residue chain is o-succinylbenzoate synthase (320 aa).

Lys133 acts as the Proton donor in catalysis. Asp161, Glu190, and Asp213 together coordinate Mg(2+). Lys235 acts as the Proton acceptor in catalysis.

This sequence belongs to the mandelate racemase/muconate lactonizing enzyme family. MenC type 1 subfamily. The cofactor is a divalent metal cation.

The catalysed reaction is (1R,6R)-6-hydroxy-2-succinyl-cyclohexa-2,4-diene-1-carboxylate = 2-succinylbenzoate + H2O. It participates in quinol/quinone metabolism; 1,4-dihydroxy-2-naphthoate biosynthesis; 1,4-dihydroxy-2-naphthoate from chorismate: step 4/7. Its pathway is quinol/quinone metabolism; menaquinone biosynthesis. In terms of biological role, converts 2-succinyl-6-hydroxy-2,4-cyclohexadiene-1-carboxylate (SHCHC) to 2-succinylbenzoate (OSB). This Escherichia coli (strain SMS-3-5 / SECEC) protein is o-succinylbenzoate synthase.